Reading from the N-terminus, the 543-residue chain is CTP synthase (543 aa).

Residues 1 to 267 (MKQTKYIFVT…LSPIAEILDL (267 aa)) form an amidoligase domain region. S15 serves as a coordination point for CTP. S15 provides a ligand contact to UTP. Residues 16–21 (SLGKGI) and D73 each bind ATP. Mg(2+)-binding residues include D73 and E141. CTP is bound by residues 148 to 150 (DIE), 188 to 193 (KTKPTQ), and K224. UTP contacts are provided by residues 188-193 (KTKPTQ) and K224. The region spanning 292–543 (KIAFVGKYVD…IKAAINYEDN (252 aa)) is the Glutamine amidotransferase type-1 domain. G354 lines the L-glutamine pocket. Residue C381 is the Nucleophile; for glutamine hydrolysis of the active site. Residues 382-385 (LGMQ), E405, and R473 each bind L-glutamine. Residues H516 and E518 contribute to the active site.

Belongs to the CTP synthase family. As to quaternary structure, homotetramer.

The catalysed reaction is UTP + L-glutamine + ATP + H2O = CTP + L-glutamate + ADP + phosphate + 2 H(+). It carries out the reaction L-glutamine + H2O = L-glutamate + NH4(+). The enzyme catalyses UTP + NH4(+) + ATP = CTP + ADP + phosphate + 2 H(+). Its pathway is pyrimidine metabolism; CTP biosynthesis via de novo pathway; CTP from UDP: step 2/2. Its activity is regulated as follows. Allosterically activated by GTP, when glutamine is the substrate; GTP has no effect on the reaction when ammonia is the substrate. The allosteric effector GTP functions by stabilizing the protein conformation that binds the tetrahedral intermediate(s) formed during glutamine hydrolysis. Inhibited by the product CTP, via allosteric rather than competitive inhibition. Functionally, catalyzes the ATP-dependent amination of UTP to CTP with either L-glutamine or ammonia as the source of nitrogen. Regulates intracellular CTP levels through interactions with the four ribonucleotide triphosphates. This is CTP synthase from Campylobacter jejuni subsp. jejuni serotype O:2 (strain ATCC 700819 / NCTC 11168).